The chain runs to 70 residues: DNA-directed RNA polymerase subunit epsilon (70 aa).

This sequence belongs to the RNA polymerase subunit epsilon family. As to quaternary structure, RNAP is composed of a core of 2 alpha, a beta and a beta' subunit. The core is associated with a delta subunit, and at least one of epsilon or omega. When a sigma factor is associated with the core the holoenzyme is formed, which can initiate transcription.

The catalysed reaction is RNA(n) + a ribonucleoside 5'-triphosphate = RNA(n+1) + diphosphate. A non-essential component of RNA polymerase (RNAP). The chain is DNA-directed RNA polymerase subunit epsilon from Leuconostoc mesenteroides subsp. mesenteroides (strain ATCC 8293 / DSM 20343 / BCRC 11652 / CCM 1803 / JCM 6124 / NCDO 523 / NBRC 100496 / NCIMB 8023 / NCTC 12954 / NRRL B-1118 / 37Y).